Reading from the N-terminus, the 237-residue chain is UPF0053 protein HI_0056 (237 aa).

The next 7 helical transmembrane spans lie at 12-32, 49-69, 90-110, 126-146, 151-171, 188-208, and 210-230; these read ISLV…IIFI, ILGL…LAWI, ILLI…KEAI, YLGV…DSVI, MASH…VMMF, ILAL…SLDI, and IPKG…MINI.

This sequence belongs to the UPF0053 family.

It localises to the cell membrane. This Haemophilus influenzae (strain ATCC 51907 / DSM 11121 / KW20 / Rd) protein is UPF0053 protein HI_0056.